We begin with the raw amino-acid sequence, 794 residues long: Mitochondrial intermediate peptidase (794 aa).

A mitochondrion-targeting transit peptide spans 1 to 39; that stretch reads MRVTSSRLLQGGSLVSRVLKRRLNNASRTKKGWFSTRTL. His581 serves as a coordination point for Zn(2+). Glu582 is a catalytic residue. Positions 585 and 588 each coordinate Zn(2+).

Belongs to the peptidase M3 family. The cofactor is Zn(2+).

The protein localises to the mitochondrion matrix. It carries out the reaction Release of an N-terminal octapeptide as second stage of processing of some proteins imported into the mitochondrion.. In terms of biological role, cleaves proteins, imported into the mitochondrion, to their mature size. While most mitochondrial precursor proteins are processed to the mature form in one step by mitochondrial processing peptidase (MPP), the sequential cleavage by MIP of an octapeptide after initial processing by MPP is a required step for a subgroup of nuclear-encoded precursor proteins destined for the matrix or the inner membrane. The polypeptide is Mitochondrial intermediate peptidase (OCT1) (Debaryomyces hansenii (strain ATCC 36239 / CBS 767 / BCRC 21394 / JCM 1990 / NBRC 0083 / IGC 2968) (Yeast)).